The sequence spans 337 residues: Glutaredoxin-3 (337 aa).

Residue alanine 2 is modified to N-acetylalanine. The Thioredoxin domain occupies 2 to 119; sequence AAGAAEAGEA…LTKKVQRHVS (118 aa). A Phosphoserine modification is found at serine 119. 2 consecutive Glutaredoxin domains span residues 144–238 and 239–337; these read HAAP…PKLE and ERLK…KGEN. Positions 161 and 263 each coordinate [2Fe-2S] cluster.

In terms of assembly, homodimer; the homodimer is independent of 2Fe-2S clusters. Heterotrimer; forms a heterotrimeric complex composed by two BOLA2 molecules and one GLRX3 molecule; linked by [2Fe-2S] clusters. Interacts (via N-terminus) with PRKCQ/PKC-theta. Interacts (via C-terminus) with CSRP3. Interacts with CSRP2.

The protein localises to the cytoplasm. It localises to the cytosol. It is found in the cell cortex. Its subcellular location is the myofibril. The protein resides in the sarcomere. The protein localises to the z line. In terms of biological role, together with BOLA2, acts as a cytosolic iron-sulfur (Fe-S) cluster assembly factor that facilitates [2Fe-2S] cluster insertion into a subset of cytosolic proteins. Acts as a critical negative regulator of cardiac hypertrophy and a positive inotropic regulator. Required for hemoglobin maturation. Does not possess any thyoredoxin activity since it lacks the conserved motif that is essential for catalytic activity. In Mus musculus (Mouse), this protein is Glutaredoxin-3 (Glrx3).